The chain runs to 382 residues: MRLSIIAAVLPLALAAPVAEPEIAPLIEARGAQPIAGKYIVKLKDEAKFGIMNAKSKIPGIERVYENVLNGFSATLSNEELERLRRDPDVESIEQDAIFSINAITQQQGATWGLTRISHRARGSTAYAYDTSAGAGACVYVIDTGVEDTHPDFEGRAKQIKSYASTARDGHGHGTHCAGTIGSKTWGVAKKVSIFGVKVLDDSGSGSLSNIVAGMDFVASDRQSRNCPRRTVASMSLGGGYSAALNQAAARLQSSGVFVAVAAGNDNRDAANTSPASEPTVCTVGATDSNDVRSTFSNYGRVVDIFAPGTSITSTWIGGRTNTISGTSMATPHIAGLAAYLFGLEGGSAGAMCGRIQTLSTKNVLTSIPSGTVNYLAFNGAT.

Residues 1–15 (MRLSIIAAVLPLALA) form the signal peptide. Positions 16–102 (APVAEPEIAP…IEQDAIFSIN (87 aa)) are excised as a propeptide. In terms of domain architecture, Inhibitor I9 spans 56 to 99 (SKIPGIERVYENVLNGFSATLSNEELERLRRDPDVESIEQDAIF). The 272-residue stretch at 111–382 (TWGLTRISHR…VNYLAFNGAT (272 aa)) folds into the Peptidase S8 domain. Intrachain disulfides connect Cys-138/Cys-227 and Cys-282/Cys-353. Residues Asp-143, His-173, and Ser-328 each act as charge relay system in the active site.

Belongs to the peptidase S8 family.

It localises to the secreted. Its activity is regulated as follows. Inhibited by phenylmethylsulfonyl fluoride (PMSF). Its function is as follows. Serine protease which can degrade the nematode cuticle. The protein is Alkaline serine protease ver112 of Corniculantispora psalliotae (Lecanicillium psalliotae).